A 302-amino-acid polypeptide reads, in one-letter code: Quinolinate synthase (302 aa).

Positions 24 and 41 each coordinate iminosuccinate. Cysteine 86 is a binding site for [4Fe-4S] cluster. Iminosuccinate is bound by residues 112-114 and serine 129; that span reads YVN. Residue cysteine 171 participates in [4Fe-4S] cluster binding. Iminosuccinate-binding positions include 197 to 199 and threonine 214; that span reads HPE. A [4Fe-4S] cluster-binding site is contributed by cysteine 259.

Belongs to the quinolinate synthase family. Type 2 subfamily. [4Fe-4S] cluster serves as cofactor.

The protein localises to the cytoplasm. It carries out the reaction iminosuccinate + dihydroxyacetone phosphate = quinolinate + phosphate + 2 H2O + H(+). Its pathway is cofactor biosynthesis; NAD(+) biosynthesis; quinolinate from iminoaspartate: step 1/1. Functionally, catalyzes the condensation of iminoaspartate with dihydroxyacetone phosphate to form quinolinate. This chain is Quinolinate synthase, found in Dehalococcoides mccartyi (strain ATCC BAA-2266 / KCTC 15142 / 195) (Dehalococcoides ethenogenes (strain 195)).